Consider the following 708-residue polypeptide: Double-strand break repair protein MRE11 (708 aa).

Ser2 is modified (N-acetylserine). Residue Ser2 is modified to Phosphoserine. 3 residues coordinate Mn(2+): Asp20, His22, and Asp60. The segment at 87–117 (RPVQFEILSDQSVNFGFSKFPWVNYQDGNLN) is interaction with NBN. Asn128 serves as a coordination point for Mn(2+). His129 serves as the catalytic Proton donor. Mn(2+) is bound by residues His217, His245, and His247. Residue Lys255 forms a Glycyl lysine isopeptide (Lys-Gly) (interchain with G-Cter in SUMO2) linkage. Position 275 is a phosphoserine (Ser275). Lys282 is covalently cross-linked (Glycyl lysine isopeptide (Lys-Gly) (interchain with G-Cter in UFM1)). Lys339 is covalently cross-linked (Glycyl lysine isopeptide (Lys-Gly) (interchain with G-Cter in ubiquitin)). Lys384 is covalently cross-linked (Glycyl lysine isopeptide (Lys-Gly) (interchain with G-Cter in SUMO)). Lys416 is covalently cross-linked (Glycyl lysine isopeptide (Lys-Gly) (interchain with G-Cter in SUMO2)). A Glycyl lysine isopeptide (Lys-Gly) (interchain with G-Cter in SUMO) cross-link involves residue Lys467. A Glycyl lysine isopeptide (Lys-Gly) (interchain with G-Cter in ubiquitin) cross-link involves residue Lys480. Disordered regions lie at residues 507-540 (TRQK…ASAF) and 556-614 (NDSD…AVSA). Residues 569 to 579 (GRGRGRGRRGG) are compositionally biased toward basic residues. Arg570, Arg572, Arg574, Arg576, Arg577, Arg580, Arg587, Arg592, and Arg594 each carry asymmetric dimethylarginine. The short motif at 570–594 (RGRGRGRRGGRGQNSASRGGSQRGR) is the GAR element. A compositionally biased stretch (polar residues) spans 599–614 (LETSTRSRNSKTAVSA). Ser619 carries the post-translational modification Phosphoserine. A Glycyl lysine isopeptide (Lys-Gly) (interchain with G-Cter in SUMO2) cross-link involves residue Lys625. Ser641 carries the post-translational modification Phosphoserine. Phosphoserine; by PLK1 is present on Ser649. Positions 651-708 (VEEDIFPTTSKTDQRWSSTSSSKIMSQSQVSKGVDFESSEDDDDDPFMNTSSLRRNRR) are disordered. Over residues 667 to 681 (SSTSSSKIMSQSQVS) the composition is skewed to low complexity. The residue at position 673 (Lys673) is an N6-lactoyllysine. A phosphoserine; by ATM mark is found at Ser676 and Ser678. A compositionally biased stretch (acidic residues) spans 687-696 (ESSEDDDDDP). Ser688 bears the Phosphoserine; by CDK2 mark. 2 positions are modified to phosphoserine: Ser689 and Ser701. Polar residues predominate over residues 698–708 (MNTSSLRRNRR).

It belongs to the MRE11/RAD32 family. In terms of assembly, component of the MRN complex composed of two heterodimers RAD50 and MRE11 associated with a single NBN. The MRN complexes dimerize on DNA to form joined MRN-MRN oligomers required for DNA double-strand break repair. As part of the MRN complex, interacts with MCM9; the interaction recruits the complex to DNA repair sites. Component of the BASC complex, at least composed of BRCA1, MSH2, MSH6, MLH1, ATM, BLM, RAD50, MRE11 and NBN. Found in a complex with TERF2. Interacts with DCLRE1C/Artemis and DCLRE1B/Apollo. Interacts with ATF2. Interacts with EXD2. Interacts with MRNIP. Interacts with SAMHD1; leading to stimulate 3'-5' exonuclease activity. Interacts (when ubiquitinated) with UBQLN4 (via its UBA domain). Interacts with CYREN (via XLF motif). Interacts with GFI1; promoting methylation by PRMT1. Interacts with DYNLL1; inhibiting the activity of MRE11. Interacts with C1QBP and RAD50; interaction takes place in absence of DNA damage to form the MRC (MRE11-RAD50-C1QBP) complex that inhibits the activity of MRE11. Interacts with AGER/RAGE. AGER is recruited to DNA double-strand break sites where it enhances MRE11 endonuclease activity to promote DNA repair. As to quaternary structure, (Microbial infection) Interacts with herpes simplex virus 1 protein UL12. Mn(2+) serves as cofactor. Post-translationally, phosphorylated by ATM at Ser-676 and Ser-678 in response to DNA damage, promoting MRE11 activity: phosphorylation activates MRE11 by preventing the interaction between MRE11 and the C1QBP inhibitor. Phosphorylation at Ser-649 by PLK1 primes for phosphorylation at Ser-688 by CK2, inhibiting recruitment of the MRN complex to DNA damage sites. In terms of processing, asymmetric dimethylation by PRMT1 promotes MRE11 exonuclease activity. Lactylation at Lys-673 by CREBBP/CBP in response to DNA damage promotes DNA binding and MRE11 activity. Post-translationally, acetylated on lysine residues by KAT2A /GCN5. In terms of processing, ubiquitinated following DNA damage. Ubiquitination triggers interaction with UBQLN4, leading to MRE11 removal from chromatin and degradation by the proteasome. Ubiquitinated at Lys-339 and Lys-480 by RNF126 via 'Lys-27'- and 'Lys-29'-linked polyubiquitin chains, promoting the exonuclease activity of MRE11. SUMOylated by PIAS1, stabilizing MRE11 on chromatin during end resection. DeSUMOylated by SENP3 following removal from DNA double-strand breaks (DSBs). Post-translationally, ufmylation at Lys-282 promotes MRE11 activity and is required for activation of the ATM and ATR kinases by the MRN complex. In terms of processing, (Microbial infection) Following infection by adenovirus E4, ubiquitinated and degraded by a SCF-like E3 ubiquitin ligase complex containing viral proteins E1B-55K and E4-ORF6.

It is found in the nucleus. Its subcellular location is the chromosome. The protein resides in the telomere. Interaction with SAMHD1 stimulates the double-strand-specific 3'-5' exonuclease activity. RBBP8/CtIP specifically promotes the endonuclease activity to clear protein-DNA adducts and generate clean double-strand break ends. DYNLL1-binding inhibits the activity of MRE11. MRE11 activity is inhibited by C1QBP: in absence of DNA damage, C1QBP interacts with unphosphorylated MRE11, preventing formation and activity of the MRN complex. The mirin-derivative PFM39, specifically inhibits the 3'-5' exonuclease activity. The N-alkylated mirin-derivatives PFM03 and PFM01 specifically inhibit the endonuclease activity. Core component of the MRN complex, which plays a central role in double-strand break (DSB) repair, DNA recombination, maintenance of telomere integrity and meiosis. The MRN complex is involved in the repair of DNA double-strand breaks (DSBs) via homologous recombination (HR), an error-free mechanism which primarily occurs during S and G2 phases. The complex (1) mediates the end resection of damaged DNA, which generates proper single-stranded DNA, a key initial steps in HR, and is (2) required for the recruitment of other repair factors and efficient activation of ATM and ATR upon DNA damage. Within the MRN complex, MRE11 possesses both single-strand endonuclease activity and double-strand-specific 3'-5' exonuclease activity. After DSBs, MRE11 is loaded onto DSBs sites and cleaves DNA by cooperating with RBBP8/CtIP to initiate end resection. MRE11 first endonucleolytically cleaves the 5' strand at DNA DSB ends to prevent non-homologous end joining (NHEJ) and licence HR. It then generates a single-stranded DNA gap via 3' to 5' exonucleolytic degradation to create entry sites for EXO1- and DNA2-mediated 5' to 3' long-range resection, which is required for single-strand invasion and recombination. RBBP8/CtIP specifically promotes the endonuclease activity of MRE11 to clear protein-DNA adducts and generate clean double-strand break ends. MRE11 endonuclease activity is also enhanced by AGER/RAGE. The MRN complex is also required for DNA damage signaling via activation of the ATM and ATR kinases: the nuclease activity of MRE11 is not required to activate ATM and ATR. The MRN complex is also required for the processing of R-loops. The MRN complex is involved in the activation of the cGAS-STING pathway induced by DNA damage during tumorigenesis: the MRN complex acts by displacing CGAS from nucleosome sequestration, thereby activating it. In telomeres the MRN complex may modulate t-loop formation. In terms of biological role, MRE11 contains two DNA-binding domains (DBDs), enabling it to bind both single-stranded DNA (ssDNA) and double-stranded DNA (dsDNA). The sequence is that of Double-strand break repair protein MRE11 from Homo sapiens (Human).